Consider the following 647-residue polypeptide: Golgi-associated RAB2B interactor protein 3 (647 aa).

The segment covering isoleucine 188–valine 202 has biased composition (polar residues). Disordered regions lie at residues isoleucine 188–aspartate 220, threonine 267–arginine 296, serine 361–serine 384, and arginine 465–serine 573. Basic and acidic residues predominate over residues isoleucine 205–lysine 214. Polar residues predominate over residues serine 361–serine 378. Serine 378 is modified (phosphoserine). Residues threonine 478–lysine 491 show a composition bias toward basic and acidic residues. Over residues glycine 492–arginine 501 the composition is skewed to basic residues. Residues arginine 494 to lysine 511 carry the Bipartite nuclear localization signal motif. Basic and acidic residues predominate over residues lysine 528–threonine 556. Phosphoserine occurs at positions 634 and 636.

The protein belongs to the GARIN family. Interacts (via N-terminus) with RAB2B (in GTP-bound form). Interacts with FRG1.

The protein resides in the golgi apparatus. It localises to the nucleus. Its subcellular location is the cajal body. May be involved in RNA biogenesis. This Rattus norvegicus (Rat) protein is Golgi-associated RAB2B interactor protein 3 (Garin3).